The sequence spans 388 residues: Fetuin-B (388 aa).

The first 18 residues, 1–18 (MGLLRLLVLCTLAACCMA), serve as a signal peptide directing secretion. 2 Cystatin fetuin-B-type domains span residues 28–141 (QRPL…YNCT) and 152–264 (TTCP…VTCE). N-linked (GlcNAc...) asparagine glycosylation occurs at asparagine 40. Intrachain disulfides connect cysteine 96–cysteine 107, cysteine 120–cysteine 140, cysteine 154–cysteine 157, cysteine 217–cysteine 224, and cysteine 237–cysteine 263. Residue asparagine 139 is glycosylated (N-linked (GlcNAc...) asparagine). 2 disordered regions span residues 270 to 343 (AQVP…PQGD) and 367 to 388 (KEQR…VLPP). The span at 279-300 (AVTQGPQKLPQKNTAPTSSPSV) shows a compositional bias: polar residues. O-linked (GalNAc...) threonine glycosylation is found at threonine 292 and threonine 295. Serine 321 carries the post-translational modification Phosphoserine. Residues 367–381 (KEQRSAECPGPEKEN) show a composition bias toward basic and acidic residues.

Belongs to the fetuin family. As to expression, liver, lung and tongue.

Its subcellular location is the secreted. Functionally, protease inhibitor required for egg fertilization. Required to prevent premature zona pellucida hardening before fertilization, probably by inhibiting the protease activity of ASTL, a protease that mediates the cleavage of ZP2 and triggers zona pellucida hardening. This Mus musculus (Mouse) protein is Fetuin-B (Fetub).